The primary structure comprises 597 residues: Proteasome-associated ATPase (597 aa).

A compositionally biased stretch (basic and acidic residues) spans 1 to 12; it reads MQHDRPGSRPEE. A disordered region spans residues 1–22; sequence MQHDRPGSRPEEGGEQQIGGDA. A coiled-coil region spans residues 21–97; that stretch reads DAELNSQIRL…REEVDRLAQP (77 aa). 284–289 lines the ATP pocket; it reads GCGKTL. The interval 596-597 is docks into pockets in the proteasome alpha-ring; the sequence is YL.

Belongs to the AAA ATPase family. In terms of assembly, homohexamer. Assembles into a hexameric ring structure that caps the 20S proteasome core. Strongly interacts with the prokaryotic ubiquitin-like protein Pup through a hydrophobic interface; the interacting region of ARC lies in its N-terminal coiled-coil domain. There is one Pup binding site per ARC hexamer ring. Upon ATP-binding, the C-terminus of ARC interacts with the alpha-rings of the proteasome core, possibly by binding to the intersubunit pockets.

Its pathway is protein degradation; proteasomal Pup-dependent pathway. Functionally, ATPase which is responsible for recognizing, binding, unfolding and translocation of pupylated proteins into the bacterial 20S proteasome core particle. May be essential for opening the gate of the 20S proteasome via an interaction with its C-terminus, thereby allowing substrate entry and access to the site of proteolysis. Thus, the C-termini of the proteasomal ATPase may function like a 'key in a lock' to induce gate opening and therefore regulate proteolysis. This chain is Proteasome-associated ATPase, found in Saccharopolyspora erythraea (strain ATCC 11635 / DSM 40517 / JCM 4748 / NBRC 13426 / NCIMB 8594 / NRRL 2338).